The sequence spans 401 residues: Exodeoxyribonuclease 7 large subunit (401 aa).

Belongs to the XseA family. In terms of assembly, heterooligomer composed of large and small subunits.

The protein localises to the cytoplasm. The catalysed reaction is Exonucleolytic cleavage in either 5'- to 3'- or 3'- to 5'-direction to yield nucleoside 5'-phosphates.. Functionally, bidirectionally degrades single-stranded DNA into large acid-insoluble oligonucleotides, which are then degraded further into small acid-soluble oligonucleotides. The sequence is that of Exodeoxyribonuclease 7 large subunit from Clostridium botulinum (strain Loch Maree / Type A3).